The sequence spans 469 residues: Protein DETOXIFICATION 18 (469 aa).

Transmembrane regions (helical) follow at residues 40–60 (LPMI…VMFA), 73–93 (LANS…SGAL), 121–141 (LVFT…FLLL), 152–172 (ALYM…QNIL), 183–203 (PLVL…YALV), 206–226 (AGLG…IAFV), 252–274 (HVVL…YWAF), 293–313 (LVAI…GLSA), 344–364 (VLAL…VGLF), 374–394 (FASL…QGVL), 406–426 (LATV…SVLC), and 438–458 (WIGL…MTIF).

Belongs to the multi antimicrobial extrusion (MATE) (TC 2.A.66.1) family.

It is found in the membrane. The protein is Protein DETOXIFICATION 18 of Arabidopsis thaliana (Mouse-ear cress).